The following is a 318-amino-acid chain: Phosphatidylglycerol--prolipoprotein diacylglyceryl transferase (318 aa).

A run of 7 helical transmembrane segments spans residues 23–43, 59–79, 98–118, 124–146, 192–212, 219–239, and 253–273; these read PLTIRFYALCILAGIVIGAWL, MDIIMWAVPFGIVGGRLYHVI, IWEGGLGIWGAVAVGLAGAAI, GVRLATFADAAAPGLLLAQAMGR, FQPTFLYESLWCLAAAALLVF, LGAGSVFALYVVLYTAGRFIF, and LRVNTWVSALLFLAALAVFLI. Arg146 serves as a coordination point for a 1,2-diacyl-sn-glycero-3-phospho-(1'-sn-glycerol). Residues 293-312 show a composition bias toward basic and acidic residues; that stretch reads FDTRANGHDPEKHDETDGKG. Residues 293–318 are disordered; it reads FDTRANGHDPEKHDETDGKGNRHHVP.

Belongs to the Lgt family.

Its subcellular location is the cell membrane. The enzyme catalyses L-cysteinyl-[prolipoprotein] + a 1,2-diacyl-sn-glycero-3-phospho-(1'-sn-glycerol) = an S-1,2-diacyl-sn-glyceryl-L-cysteinyl-[prolipoprotein] + sn-glycerol 1-phosphate + H(+). It participates in protein modification; lipoprotein biosynthesis (diacylglyceryl transfer). Its function is as follows. Catalyzes the transfer of the diacylglyceryl group from phosphatidylglycerol to the sulfhydryl group of the N-terminal cysteine of a prolipoprotein, the first step in the formation of mature lipoproteins. The polypeptide is Phosphatidylglycerol--prolipoprotein diacylglyceryl transferase (Paenarthrobacter aurescens (strain TC1)).